Here is a 362-residue protein sequence, read N- to C-terminus: Probable protein phosphatase 2C 24 (362 aa).

In terms of domain architecture, PPM-type phosphatase spans Arg-77 to Leu-360. Mn(2+) is bound by residues Asp-117, Gly-118, Asp-295, and Asp-351.

This sequence belongs to the PP2C family. Requires Mg(2+) as cofactor. Mn(2+) is required as a cofactor.

The enzyme catalyses O-phospho-L-seryl-[protein] + H2O = L-seryl-[protein] + phosphate. The catalysed reaction is O-phospho-L-threonyl-[protein] + H2O = L-threonyl-[protein] + phosphate. The protein is Probable protein phosphatase 2C 24 of Arabidopsis thaliana (Mouse-ear cress).